We begin with the raw amino-acid sequence, 602 residues long: MFS-type efflux transporter pyiT (602 aa).

Residues 1 to 33 form a disordered region; that stretch reads MEKAKDSLPTTGDPVPSQGTINPVDETGGSASD. 7 helical membrane passes run 43-63, 123-143, 156-176, 185-205, 212-232, 251-271, and 282-302; these read FWFTFSSLVLTAFLSALEGSV, WLTIGAVVIFTVGSGICGGAT, GLGSAGINMLVELILCDLLPL, IIFMFVILGSVIGPFLGGILV, WVFYINIPFSGVCVVLLFFFL, FFGNFLLAASVGSCLFALTYG, and IIVSLVLGLLGHVAFMFFEAS. N-linked (GlcNAc...) asparagine glycosylation occurs at asparagine 317. The next 6 helical transmembrane spans lie at 325 to 345, 357 to 377, 386 to 406, 410 to 430, 451 to 471, and 524 to 544; these read IATFLQTLVSFWVLYFLPLYF, GVMLLPFSVVYALSSLAGGAL, NIHFASFALMTIGMGTLTILN, SLAVIVVLEMIVALAIGVPTA, TFAFLRSVGTIWGVSIPAAIF, and LERVWQIGIVFAGVGFLVIFL. Polar residues predominate over residues 564–585; the sequence is IPQTAADNSASRPNTINDTASQ. The tract at residues 564–602 is disordered; it reads IPQTAADNSASRPNTINDTASQAPILKQRRSTNQERETV. N-linked (GlcNAc...) asparagine glycosylation occurs at asparagine 580.

It belongs to the major facilitator superfamily.

The protein resides in the cell membrane. MFS-type efflux transporter; part of the gene cluster that mediates the biosynthesis of the mycotoxin pyrichalasin H, a tyrosine-derived cytochalasan that inhibits the growth of rice seedlings, but also inhibits lymphocyte capping and actin polymerization and alters cell morphology. Pyrichalasin H is indicated as the responsible agent for the genus-specific pathogenicity of M.grisea toward crabgrass. PyiT might be involved in the excretion of pyrichalasin H. The protein is MFS-type efflux transporter pyiT of Pyricularia grisea (Crabgrass-specific blast fungus).